Here is a 141-residue protein sequence, read N- to C-terminus: Large ribosomal subunit protein uL11 (141 aa).

The protein belongs to the universal ribosomal protein uL11 family. As to quaternary structure, part of the ribosomal stalk of the 50S ribosomal subunit. Interacts with L10 and the large rRNA to form the base of the stalk. L10 forms an elongated spine to which L12 dimers bind in a sequential fashion forming a multimeric L10(L12)X complex. One or more lysine residues are methylated.

In terms of biological role, forms part of the ribosomal stalk which helps the ribosome interact with GTP-bound translation factors. The sequence is that of Large ribosomal subunit protein uL11 from Streptococcus pneumoniae serotype 2 (strain D39 / NCTC 7466).